A 52-amino-acid polypeptide reads, in one-letter code: DLLEALSQDQKLLMAKFLPHIYAELANREGNWHEDAALRPLHDHDYPGWMDF.

This sequence belongs to the gastrin/cholecystokinin family.

The protein resides in the secreted. Its function is as follows. May control digestion processes. This chain is Gastrin/cholecystokinin-like peptide, found in Trachemys scripta (Red-eared slider turtle).